Consider the following 218-residue polypeptide: Claudin-3 (218 aa).

The Cytoplasmic segment spans residues 1 to 8 (MSMGLEIA). Residues 9-29 (GTSLAVLGWLSTIVCCALPMW) form a helical membrane-spanning segment. Residues 30-80 (RVTAFIGSSIITAQITWEGLWMNCVVQSTGQMQCKVYDSLLALPQDLQAAR) are Extracellular-facing. The chain crosses the membrane as a helical span at residues 81–101 (ALIVVSILLAAFGLLVALVGA). Residues 102–115 (QCTNCVQDDTAKAK) are Cytoplasmic-facing. The helical transmembrane segment at 116–136 (ITIVAGVLFLLAALLTLVPVS) threads the bilayer. Residues 137–159 (WSANTIIRDFYNPLVPDAQKREM) are Extracellular-facing. The chain crosses the membrane as a helical span at residues 160 to 180 (GAGLYVGWAAAALQLLGGALL). At 181–218 (CCSCPPRDKKYAPTKIVYSAPRSAGPGTSTAYDRKDYV) the chain is on the cytoplasmic side. Y198 bears the Phosphotyrosine mark. 2 positions are modified to phosphoserine: S199 and S209. An interactions with TJP1, TJP2 and TJP3 region spans residues 217-218 (YV).

The protein belongs to the claudin family. Can form homo- and heteropolymers with other CLDN. Homopolymers interact with CLDN1 and CLDN2 homopolymers. Interacts in cis (within the same plasma membrane) with CLDN19. Directly interacts with TJP1/ZO-1, TJP2/ZO-2 and TJP3/ZO-3.

Its subcellular location is the cell junction. The protein resides in the tight junction. It is found in the cell membrane. In terms of biological role, plays a major role in tight junction-specific obliteration of the intercellular space, through calcium-independent cell-adhesion activity. This is Claudin-3 (CLDN3) from Canis lupus familiaris (Dog).